A 311-amino-acid chain; its full sequence is Syndecan-1 (311 aa).

The signal sequence occupies residues 1–22; sequence MRRAALWLWLCALALRLQPALP. Residues 23 to 255 lie on the Extracellular side of the membrane; that stretch reads QIVAVNVPPE…SLLDRKEVLG (233 aa). 2 disordered regions span residues 29-59 and 152-184; these read VPPE…LSRQ and SHPH…VEGG. Acidic residues predominate over residues 32–42; the sequence is EDQDGSGDDSD. O-linked (Xyl...) (chondroitin sulfate) serine glycosylation is present at S37. An N-linked (GlcNAc...) asparagine glycan is attached at N43. O-linked (Xyl...) (heparan sulfate) serine glycosylation is found at S45 and S47. O-linked (Xyl...) (chondroitin sulfate) serine glycans are attached at residues S207 and S217. Residues 256–276 traverse the membrane as a helical segment; that stretch reads GVIAGGLVGLIFAVCLVAFML. The Cytoplasmic segment spans residues 277 to 311; that stretch reads YRMKKKDEGSYSLEEPKQANGGAYQKPTKQEEFYA. A disordered region spans residues 285-311; that stretch reads GSYSLEEPKQANGGAYQKPTKQEEFYA. S286 carries the post-translational modification Phosphoserine.

Belongs to the syndecan proteoglycan family. As to quaternary structure, interacts with CDCP1. Interacts (via C-terminus) with TIAM1 (via PDZ domain). Interacts with MDK. In terms of processing, shedding is enhanced by a number of factors such as heparanase, thrombin or EGF. Also by stress and wound healing. PMA-mediated shedding is inhibited by TIMP3.

The protein resides in the membrane. The protein localises to the secreted. It is found in the extracellular exosome. Cell surface proteoglycan that contains both heparan sulfate and chondroitin sulfate and that links the cytoskeleton to the interstitial matrix. Regulates exosome biogenesis in concert with SDCBP and PDCD6IP. Able to induce its own expression in dental mesenchymal cells and also in the neighboring dental epithelial cells via an MSX1-mediated pathway. In Mus musculus (Mouse), this protein is Syndecan-1.